Reading from the N-terminus, the 264-residue chain is 3-methyl-2-oxobutanoate hydroxymethyltransferase (264 aa).

Residues Asp45 and Asp84 each contribute to the Mg(2+) site. Residues 45–46, Asp84, and Lys113 contribute to the 3-methyl-2-oxobutanoate site; that span reads DS. Glu115 is a binding site for Mg(2+). Catalysis depends on Glu182, which acts as the Proton acceptor.

The protein belongs to the PanB family. As to quaternary structure, homodecamer; pentamer of dimers. It depends on Mg(2+) as a cofactor.

The protein localises to the cytoplasm. It carries out the reaction 3-methyl-2-oxobutanoate + (6R)-5,10-methylene-5,6,7,8-tetrahydrofolate + H2O = 2-dehydropantoate + (6S)-5,6,7,8-tetrahydrofolate. It participates in cofactor biosynthesis; (R)-pantothenate biosynthesis; (R)-pantoate from 3-methyl-2-oxobutanoate: step 1/2. In terms of biological role, catalyzes the reversible reaction in which hydroxymethyl group from 5,10-methylenetetrahydrofolate is transferred onto alpha-ketoisovalerate to form ketopantoate. This is 3-methyl-2-oxobutanoate hydroxymethyltransferase from Helicobacter hepaticus (strain ATCC 51449 / 3B1).